The following is a 293-amino-acid chain: MTHDYIVKALAFDGEIRAYAALTTETVQEAQTRHYTWPTASAAMGRTMTATAMMGAMLKGDQKLTVTVDGQGPIGRIIADANAKGEVRAYVDHPQTHFPLNEQGKLDVRRAVGTNGSIIVVKDVGMKDYFSGASPIVSGELGEDFTYYYATSEQTPSSVGLGVLVNPDNTIKAAGGFIIQVMPGAKDETISKLEKAISEMTPVSKLIEQGLTPEGLLNEILGEDHVQILEKMPVQFECNCSHEKFLNAIKGLGEAEIQNMIKEDHGAEAVCHFCGNKYKYTEEELNVLLESLA.

2 disulfide bridges follow: C238/C240 and C271/C274.

Belongs to the HSP33 family. Post-translationally, under oxidizing conditions two disulfide bonds are formed involving the reactive cysteines. Under reducing conditions zinc is bound to the reactive cysteines and the protein is inactive.

It is found in the cytoplasm. Redox regulated molecular chaperone. Protects both thermally unfolding and oxidatively damaged proteins from irreversible aggregation. Plays an important role in the bacterial defense system toward oxidative stress. The sequence is that of 33 kDa chaperonin from Staphylococcus aureus (strain Mu3 / ATCC 700698).